A 554-amino-acid polypeptide reads, in one-letter code: 3-(3-hydroxy-phenyl)propionate/3-hydroxycinnamic acid hydroxylase (554 aa).

Residues 17–46 (QVAI…VVEK) and 285–295 (FRIDRVLLAGD) contribute to the FAD site.

Belongs to the PheA/TfdB FAD monooxygenase family. Requires FAD as cofactor.

The enzyme catalyses 3-(3-hydroxyphenyl)propanoate + NADH + O2 + H(+) = 3-(2,3-dihydroxyphenyl)propanoate + NAD(+) + H2O. It catalyses the reaction (2E)-3-(3-hydroxyphenyl)prop-2-enoate + NADH + O2 + H(+) = (2E)-3-(2,3-dihydroxyphenyl)prop-2-enoate + NAD(+) + H2O. It participates in aromatic compound metabolism; 3-phenylpropanoate degradation. Functionally, catalyzes the insertion of one atom of molecular oxygen into position 2 of the phenyl ring of 3-(3-hydroxyphenyl)propionate (3-HPP) and hydroxycinnamic acid (3HCI). This Escherichia coli O17:K52:H18 (strain UMN026 / ExPEC) protein is 3-(3-hydroxy-phenyl)propionate/3-hydroxycinnamic acid hydroxylase.